We begin with the raw amino-acid sequence, 351 residues long: Increased glyphosate resistance protein (351 aa).

Residues 1–18 (MHREDDSTSTGRREERLS) are compositionally biased toward basic and acidic residues. The interval 1–29 (MHREDDSTSTGRREERLSTGKGDSLQPGP) is disordered.

Confers an increase in glyphosate resistance when expressed in E.coli. The polypeptide is Increased glyphosate resistance protein (Pseudomonas sp. (strain PG2982)).